A 325-amino-acid polypeptide reads, in one-letter code: Probable isoaspartyl peptidase/L-asparaginase GA20639 (325 aa).

Threonine 184 acts as the Nucleophile in catalysis. Substrate-binding positions include 212 to 215 and 235 to 238; these read RIGD and TGHG.

This sequence belongs to the Ntn-hydrolase family. In terms of assembly, heterodimer of an alpha and beta chain produced by autocleavage. Cleaved into an alpha and beta chain by autocatalysis; this activates the enzyme. The N-terminal residue of the beta subunit is responsible for the nucleophile hydrolase activity.

The enzyme catalyses L-asparagine + H2O = L-aspartate + NH4(+). The catalysed reaction is Cleavage of a beta-linked Asp residue from the N-terminus of a polypeptide.. Functionally, has both L-asparaginase and beta-aspartyl peptidase activity. Does not have aspartylglucosaminidase activity and is inactive toward GlcNAc-L-Asn. Likewise, has no activity toward glutamine. The protein is Probable isoaspartyl peptidase/L-asparaginase GA20639 of Drosophila pseudoobscura pseudoobscura (Fruit fly).